The primary structure comprises 878 residues: Alanine--tRNA ligase (878 aa).

Zn(2+) is bound by residues His571, His575, Cys673, and His677.

It belongs to the class-II aminoacyl-tRNA synthetase family. Requires Zn(2+) as cofactor.

It is found in the cytoplasm. The catalysed reaction is tRNA(Ala) + L-alanine + ATP = L-alanyl-tRNA(Ala) + AMP + diphosphate. In terms of biological role, catalyzes the attachment of alanine to tRNA(Ala) in a two-step reaction: alanine is first activated by ATP to form Ala-AMP and then transferred to the acceptor end of tRNA(Ala). Also edits incorrectly charged Ser-tRNA(Ala) and Gly-tRNA(Ala) via its editing domain. The polypeptide is Alanine--tRNA ligase (Syntrophus aciditrophicus (strain SB)).